A 224-amino-acid chain; its full sequence is MANSGLQLLGYFLALGGWVGIIASTALPQWKQSSYAGDAIITAVGLYEGLWMSCASQSTGQVQCKLYDSLLALDGHIQSARALMVVAVLLGFVAMVLSVVGMKCTRVGDSNPIAKGRVAIAGGALFILAGLCTLTAVSWYATLVTQEFFNPSTPVNARYEFGPALFVGWASAGLAVLGGSFLCCTCPEPERPNSSPQPYRPGPSAAAREPVVKLPASAKGPLGV.

Residues 1–7 lie on the Cytoplasmic side of the membrane; the sequence is MANSGLQ. Residues 8–28 form a helical membrane-spanning segment; that stretch reads LLGYFLALGGWVGIIASTALP. At 29 to 81 the chain is on the extracellular side; sequence QWKQSSYAGDAIITAVGLYEGLWMSCASQSTGQVQCKLYDSLLALDGHIQSAR. A disulfide bridge connects residues Cys-54 and Cys-64. A helical membrane pass occupies residues 82-102; that stretch reads ALMVVAVLLGFVAMVLSVVGM. The Cytoplasmic segment spans residues 103–117; that stretch reads KCTRVGDSNPIAKGR. Residues 118–138 form a helical membrane-spanning segment; sequence VAIAGGALFILAGLCTLTAVS. Residues 139–160 lie on the Extracellular side of the membrane; the sequence is WYATLVTQEFFNPSTPVNARYE. Residues 161–181 traverse the membrane as a helical segment; sequence FGPALFVGWASAGLAVLGGSF. Residues 182 to 224 lie on the Cytoplasmic side of the membrane; sequence LCCTCPEPERPNSSPQPYRPGPSAAAREPVVKLPASAKGPLGV. The tract at residues 191 to 224 is disordered; it reads RPNSSPQPYRPGPSAAAREPVVKLPASAKGPLGV.

Belongs to the claudin family. Can form homo- and heteropolymeric tight junction strands. Interacts with other claudins including CLDN3, CLDN10, CLDN16 and CLDN18 with highest affinity for CLDN16. Interacts (via PDZ-binding motif TRV) with TJP1 (via PDZ domain).

It localises to the cell junction. The protein localises to the tight junction. It is found in the cell membrane. It carries out the reaction Mg(2+)(in) = Mg(2+)(out). The enzyme catalyses Ca(2+)(in) = Ca(2+)(out). The catalysed reaction is Na(+)(in) = Na(+)(out). It catalyses the reaction K(+)(in) = K(+)(out). It carries out the reaction Rb(+)(in) = Rb(+)(out). The enzyme catalyses Cs(+)(in) = Cs(+)(out). The catalysed reaction is Li(+)(in) = Li(+)(out). In terms of biological role, forms paracellular channels: coassembles with CLDN16 into tight junction strands with cation-selective channels through the strands, conveying epithelial permeability in a process known as paracellular tight junction permeability. Involved in the maintenance of ion gradients along the nephron. In the thick ascending limb (TAL) of Henle's loop, facilitates sodium paracellular permeability from the interstitial compartment to the lumen, contributing to the lumen-positive transepithelial potential that drives paracellular magnesium and calcium reabsorption. Forms paracellular barriers on its own. In the peripheral nervous system, represents a major constituent of the tight junctions in Schwann cells and contributes to electrical sealing. During retinal neurogenesis, may regulate the barrier properties of tight junctions in retinal pigment epithelium, required for proper retinal tissue differentiation and vision. This is Claudin-19 from Homo sapiens (Human).